The following is a 620-amino-acid chain: Chaperone protein DnaK (620 aa).

Residue threonine 197 is modified to Phosphothreonine; by autocatalysis. Positions alanine 597 to glutamate 620 are disordered.

Belongs to the heat shock protein 70 family.

In terms of biological role, acts as a chaperone. This is Chaperone protein DnaK from Helicobacter pylori (strain G27).